A 321-amino-acid polypeptide reads, in one-letter code: Lipoyl synthase (321 aa).

7 residues coordinate [4Fe-4S] cluster: C68, C73, C79, C94, C98, C101, and S308. Positions 80 to 297 constitute a Radical SAM core domain; sequence FNHGTATFMI…KEIALELGFT (218 aa).

It belongs to the radical SAM superfamily. Lipoyl synthase family. It depends on [4Fe-4S] cluster as a cofactor.

The protein localises to the cytoplasm. The enzyme catalyses [[Fe-S] cluster scaffold protein carrying a second [4Fe-4S](2+) cluster] + N(6)-octanoyl-L-lysyl-[protein] + 2 oxidized [2Fe-2S]-[ferredoxin] + 2 S-adenosyl-L-methionine + 4 H(+) = [[Fe-S] cluster scaffold protein] + N(6)-[(R)-dihydrolipoyl]-L-lysyl-[protein] + 4 Fe(3+) + 2 hydrogen sulfide + 2 5'-deoxyadenosine + 2 L-methionine + 2 reduced [2Fe-2S]-[ferredoxin]. Its pathway is protein modification; protein lipoylation via endogenous pathway; protein N(6)-(lipoyl)lysine from octanoyl-[acyl-carrier-protein]: step 2/2. Its function is as follows. Catalyzes the radical-mediated insertion of two sulfur atoms into the C-6 and C-8 positions of the octanoyl moiety bound to the lipoyl domains of lipoate-dependent enzymes, thereby converting the octanoylated domains into lipoylated derivatives. In Vibrio vulnificus (strain CMCP6), this protein is Lipoyl synthase.